The following is a 185-amino-acid chain: Photosystem I assembly protein Ycf4 (185 aa).

2 consecutive transmembrane segments (helical) span residues 21–43 (NFCW…TSSY) and 63–85 (GLVM…CTIL).

It belongs to the Ycf4 family.

It is found in the plastid. The protein resides in the chloroplast thylakoid membrane. In terms of biological role, seems to be required for the assembly of the photosystem I complex. In Brassica oleracea (Wild cabbage), this protein is Photosystem I assembly protein Ycf4.